A 374-amino-acid polypeptide reads, in one-letter code: Alanine racemase (374 aa).

Residue Lys-40 is the Proton acceptor; specific for D-alanine of the active site. Lys-40 carries the post-translational modification N6-(pyridoxal phosphate)lysine. Arg-139 provides a ligand contact to substrate. Tyr-261 serves as the catalytic Proton acceptor; specific for L-alanine. Substrate is bound at residue Met-309.

This sequence belongs to the alanine racemase family. The cofactor is pyridoxal 5'-phosphate.

It carries out the reaction L-alanine = D-alanine. The protein operates within amino-acid biosynthesis; D-alanine biosynthesis; D-alanine from L-alanine: step 1/1. Functionally, catalyzes the interconversion of L-alanine and D-alanine. May also act on other amino acids. The protein is Alanine racemase (alr) of Rhodospirillum rubrum (strain ATCC 11170 / ATH 1.1.1 / DSM 467 / LMG 4362 / NCIMB 8255 / S1).